Reading from the N-terminus, the 84-residue chain is Cytochrome b559 subunit alpha (84 aa).

Residues Ile-22–Phe-36 form a helical membrane-spanning segment. A heme-binding site is contributed by His-24.

Belongs to the PsbE/PsbF family. In terms of assembly, heterodimer of an alpha subunit and a beta subunit. PSII is composed of 1 copy each of membrane proteins PsbA, PsbB, PsbC, PsbD, PsbE, PsbF, PsbH, PsbI, PsbJ, PsbK, PsbL, PsbM, PsbT, PsbX, Psb30/Ycf12, peripheral proteins PsbO, CyanoQ (PsbQ), PsbU, PsbV and a large number of cofactors. It forms dimeric complexes. Heme b serves as cofactor.

It localises to the cell inner membrane. Its function is as follows. This b-type cytochrome is tightly associated with the reaction center of photosystem II (PSII). PSII is a light-driven water:plastoquinone oxidoreductase that uses light energy to abstract electrons from H(2)O, generating O(2) and a proton gradient subsequently used for ATP formation. It consists of a core antenna complex that captures photons, and an electron transfer chain that converts photonic excitation into a charge separation. The polypeptide is Cytochrome b559 subunit alpha (Gloeobacter violaceus (strain ATCC 29082 / PCC 7421)).